The primary structure comprises 471 residues: tRNA-2-methylthio-N(6)-dimethylallyladenosine synthase (471 aa).

One can recognise an MTTase N-terminal domain in the interval 36-154 (KTYHIITYGC…FPQLLYKAIT (119 aa)). Residues C45, C81, C115, C191, C195, and C198 each contribute to the [4Fe-4S] cluster site. Residues 177-407 (RREGVSAFVN…VKLVEEIALK (231 aa)) form the Radical SAM core domain. The region spanning 410 to 471 (QQMLGKVCEI…SRHWLYGEVI (62 aa)) is the TRAM domain.

Belongs to the methylthiotransferase family. MiaB subfamily. As to quaternary structure, monomer. It depends on [4Fe-4S] cluster as a cofactor.

The protein resides in the cytoplasm. The enzyme catalyses N(6)-dimethylallyladenosine(37) in tRNA + (sulfur carrier)-SH + AH2 + 2 S-adenosyl-L-methionine = 2-methylsulfanyl-N(6)-dimethylallyladenosine(37) in tRNA + (sulfur carrier)-H + 5'-deoxyadenosine + L-methionine + A + S-adenosyl-L-homocysteine + 2 H(+). Its function is as follows. Catalyzes the methylthiolation of N6-(dimethylallyl)adenosine (i(6)A), leading to the formation of 2-methylthio-N6-(dimethylallyl)adenosine (ms(2)i(6)A) at position 37 in tRNAs that read codons beginning with uridine. The polypeptide is tRNA-2-methylthio-N(6)-dimethylallyladenosine synthase (Caldicellulosiruptor saccharolyticus (strain ATCC 43494 / DSM 8903 / Tp8T 6331)).